The chain runs to 318 residues: Glycine--tRNA ligase alpha subunit (318 aa).

This sequence belongs to the class-II aminoacyl-tRNA synthetase family. As to quaternary structure, tetramer of two alpha and two beta subunits.

It is found in the cytoplasm. The enzyme catalyses tRNA(Gly) + glycine + ATP = glycyl-tRNA(Gly) + AMP + diphosphate. This is Glycine--tRNA ligase alpha subunit from Saccharophagus degradans (strain 2-40 / ATCC 43961 / DSM 17024).